The following is a 130-amino-acid chain: Small ribosomal subunit protein uS9 (130 aa).

Positions 111–130 (VERKKVGLHKARRATQFSKR) are disordered. The segment covering 116 to 130 (VGLHKARRATQFSKR) has biased composition (basic residues).

Belongs to the universal ribosomal protein uS9 family.

The protein is Small ribosomal subunit protein uS9 of Xylella fastidiosa (strain M23).